A 367-amino-acid polypeptide reads, in one-letter code: 4-hydroxy-3-methylbut-2-en-1-yl diphosphate synthase (flavodoxin) (367 aa).

[4Fe-4S] cluster contacts are provided by Cys270, Cys273, Cys305, and Glu312.

The protein belongs to the IspG family. [4Fe-4S] cluster is required as a cofactor.

The catalysed reaction is (2E)-4-hydroxy-3-methylbut-2-enyl diphosphate + oxidized [flavodoxin] + H2O + 2 H(+) = 2-C-methyl-D-erythritol 2,4-cyclic diphosphate + reduced [flavodoxin]. It participates in isoprenoid biosynthesis; isopentenyl diphosphate biosynthesis via DXP pathway; isopentenyl diphosphate from 1-deoxy-D-xylulose 5-phosphate: step 5/6. In terms of biological role, converts 2C-methyl-D-erythritol 2,4-cyclodiphosphate (ME-2,4cPP) into 1-hydroxy-2-methyl-2-(E)-butenyl 4-diphosphate. This Buchnera aphidicola subsp. Schizaphis graminum (strain Sg) protein is 4-hydroxy-3-methylbut-2-en-1-yl diphosphate synthase (flavodoxin).